A 34-amino-acid chain; its full sequence is MNGDNPSPNRPLVTVVYKGPDFYDGEKKPPVNRR.

A disordered region spans residues 1–34 (MNGDNPSPNRPLVTVVYKGPDFYDGEKKPPVNRR). Over residues 24–34 (DGEKKPPVNRR) the composition is skewed to basic and acidic residues.

In Escherichia coli (strain K12), this protein is Protein MgtT.